Consider the following 186-residue polypeptide: C-type lectin domain family 19 member A (186 aa).

Residues 1 to 19 (MQRWTLWAAAFLTLHSAQA) form the signal peptide. The region spanning 47 to 179 (FKGHCYRFFP…CSRKFPFVCK (133 aa)) is the C-type lectin domain. An N-linked (GlcNAc...) asparagine glycan is attached at asparagine 58. Cystine bridges form between cysteine 68/cysteine 178 and cysteine 151/cysteine 170.

The protein resides in the secreted. The sequence is that of C-type lectin domain family 19 member A from Homo sapiens (Human).